The following is a 902-amino-acid chain: Glutamate receptor 4 (902 aa).

Positions 1–20 (MRIICRQIVLLFSGFWGLAM) are cleaved as a signal peptide. Residues 22-544 (AFPSSVQIGG…GVFSFLDPLA (523 aa)) are Extracellular-facing. N-linked (GlcNAc...) asparagine glycosylation is found at N52, N56, N258, N371, N407, and N414. Cysteines 84 and 331 form a disulfide. 3 residues coordinate L-glutamate: P500, T502, and R507. Residues 545-565 (YEIWMCIVFAYIGVSVVLFLV) traverse the membrane as a helical segment. At 566–592 (SRFSPYEWHTEEPEDGKEGPSDQPPNE) the chain is on the cytoplasmic side. The helical; Pore-forming intramembrane region spans 593–608 (FGIFNSLWFSLGAFMQ). The stretch at 609–611 (QGC) is an intramembrane region. C611 carries S-palmitoyl cysteine lipidation. Residues 612–617 (DISPRS) are Cytoplasmic-facing. The chain crosses the membrane as a helical span at residues 618-638 (LSGRIVGGVWWFFTLIIISSY). Over 639 to 813 (TANLAAFLTV…DKTSALSLSN (175 aa)) the chain is Extracellular. Positions 676, 677, and 727 each coordinate L-glutamate. C740 and C795 are disulfide-bonded. Residues 814-834 (VAGVFYILVGGLGLAMLVALI) form a helical membrane-spanning segment. At 835-902 (EFCYKSRAEA…GLAVIASDLP (68 aa)) the chain is on the cytoplasmic side. C837 carries S-palmitoyl cysteine lipidation. Phosphoserine; by PKC/PRKCG is present on S862.

Belongs to the glutamate-gated ion channel (TC 1.A.10.1) family. GRIA4 subfamily. As to quaternary structure, homotetramer or heterotetramer of pore-forming glutamate receptor subunits. Tetramers may be formed by the dimerization of dimers. Interacts with EPB41L1 via its C-terminus. Isoform 3 interacts with PICK1. Found in a complex with GRIA1, GRIA2, GRIA3, CNIH2, CNIH3, CACNG2, CACNG3, CACNG4, CACNG5, CACNG7 and CACNG8. Interacts with CACNG5 and PRKCG. Found in a complex with GRIA1, GRIA2, GRIA3, DLG4, CACNG8 and CNIH2. In terms of processing, palmitoylated. Depalmitoylated upon L-glutamate stimulation. ZDHHC3/GODZ specifically palmitoylates Cys-611, which leads to Golgi retention and decreased cell surface expression. In contrast, Cys-837 palmitoylation does not affect cell surface expression but regulates stimulation-dependent endocytosis. Post-translationally, phosphorylated at Ser-862 by PRKCG; phosphorylation increases plasma membrane-associated GRI4 expression. In terms of tissue distribution, detected in cerebellum.

The protein localises to the cell membrane. The protein resides in the postsynaptic cell membrane. It localises to the cell projection. Its subcellular location is the dendrite. The enzyme catalyses Ca(2+)(in) = Ca(2+)(out). It carries out the reaction Na(+)(in) = Na(+)(out). It catalyses the reaction Mg(2+)(in) = Mg(2+)(out). Its function is as follows. Ionotropic glutamate receptor that functions as a ligand-gated cation channel, gated by L-glutamate and glutamatergic agonists such as alpha-amino-3-hydroxy-5-methyl-4-isoxazolepropionic acid (AMPA), quisqualic acid, and kainic acid. L-glutamate acts as an excitatory neurotransmitter at many synapses in the central nervous system and plays an important role in fast excitatory synaptic transmission. Binding of the excitatory neurotransmitter L-glutamate induces a conformation change, leading to the opening of the cation channel, and thereby converts the chemical signal to an electrical impulse upon entry of monovalent and divalent cations such as sodium and calcium. The receptor then desensitizes rapidly and enters a transient inactive state, characterized by the presence of bound agonist. In the presence of CACNG8, shows resensitization which is characterized by a delayed accumulation of current flux upon continued application of L-glutamate. The sequence is that of Glutamate receptor 4 from Rattus norvegicus (Rat).